The sequence spans 156 residues: Cyanate hydratase (156 aa).

Residues R96, E99, and S122 contribute to the active site.

This sequence belongs to the cyanase family.

It catalyses the reaction cyanate + hydrogencarbonate + 3 H(+) = NH4(+) + 2 CO2. Its function is as follows. Catalyzes the reaction of cyanate with bicarbonate to produce ammonia and carbon dioxide. The chain is Cyanate hydratase from Pseudomonas aeruginosa (strain LESB58).